Reading from the N-terminus, the 200-residue chain is Protein C2-DOMAIN ABA-RELATED 5 (200 aa).

In terms of domain architecture, C2 spans 22–142; it reads VAGEKHKDRR…LKMHLHDLPS (121 aa). Residues Arg-57, Asp-58, Asp-63, Asp-109, Tyr-110, Asp-111, and Asp-117 each contribute to the Ca(2+) site.

It belongs to the plant CAR protein family. In terms of assembly, binds to PYR/PYL/RCAR abscisic acid intracellular receptors in an ABA-independent manner, both at the plasma membrane and in the nucleus.

The protein resides in the cell membrane. The protein localises to the nucleus. Its function is as follows. Stimulates the GTPase/ATPase activities of Obg-like ATPases. Mediates the transient calcium-dependent interaction of PYR/PYL/RCAR abscisic acid (ABA) receptors with the plasma membrane and thus regulates ABA sensitivity. The chain is Protein C2-DOMAIN ABA-RELATED 5 from Arabidopsis thaliana (Mouse-ear cress).